The sequence spans 185 residues: Ribosome-recycling factor (185 aa).

This sequence belongs to the RRF family.

It is found in the cytoplasm. In terms of biological role, responsible for the release of ribosomes from messenger RNA at the termination of protein biosynthesis. May increase the efficiency of translation by recycling ribosomes from one round of translation to another. The chain is Ribosome-recycling factor from Buchnera aphidicola subsp. Acyrthosiphon pisum (strain 5A).